The following is a 389-amino-acid chain: MVTVEEYRKAQRAEGPATILAIGTSTPSNCVDQSTYPDYYFRITNSEHKTELKEKFKRMCDKSMIKKRYMHLTEEILKENPNMCAYMAPSLDARQDIVVVEVPKLGKRGTQKAIKEWGQPKSKITHLVFCTTSGVDMPACDYQLAKLLPVRPSVKRLMMYQQGCFAGGTVLRLAKDLAENNKGARVLVVCSEITAVTFRGPSESHLDSLVGQALFGDGAAAIIIGSDPIIGVERPLFELVSAAQTLVPDSEGAIDGHLREVGLTFHLLKDVPGLISKNIEKSLLEAFQPLGISDWNSLFWIAHPGGPAILDQVELKLGLKPEKLRATREVLSNYGNMSSACVLFILDEMRKASTKEGLGTTGEGLEWGVLFGFGPGLTVETVVLHSVAA.

C164 is an active-site residue.

Belongs to the thiolase-like superfamily. Chalcone/stilbene synthases family.

The enzyme catalyses (E)-4-coumaroyl-CoA + 3 malonyl-CoA + 3 H(+) = 2',4,4',6'-tetrahydroxychalcone + 3 CO2 + 4 CoA. Its pathway is secondary metabolite biosynthesis; flavonoid biosynthesis. Its function is as follows. The primary product of this enzyme is 4,2',4',6'-tetrahydroxychalcone (also termed naringenin-chalcone or chalcone) which can under specific conditions spontaneously isomerize into naringenin. The sequence is that of Chalcone synthase 1 (CHS1) from Solanum lycopersicum (Tomato).